Consider the following 239-residue polypeptide: Putative transcriptional regulator of 2-aminoethylphosphonate degradation operons (239 aa).

Residues 8 to 76 (IPQYLLIKAQ…DRRGWFVTPE (69 aa)) enclose the HTH gntR-type domain. The segment at residues 36-55 (ERELCAIFNTTRITIRESLA) is a DNA-binding region (H-T-H motif).

The sequence is that of Putative transcriptional regulator of 2-aminoethylphosphonate degradation operons (phnR) from Salmonella paratyphi A (strain ATCC 9150 / SARB42).